A 488-amino-acid polypeptide reads, in one-letter code: MSKTASVGLWDQPKPFFMIFFVELWERFGFYGVQGILAIYFVQQLGFSEEQSFITFGAFTALVYGLISVGGYVGDHILGTKRTIVLGAIVMAIGYYMIGLSIMKPELIFYALGTVAVGNGLFKANPASLLAKCYQPQDPRLDGAFTLFYMSINLGSLFSLSLAPVIAEKYGYTVTYNICGIGLIIALLVYIACRRMVHNIGSAPDHHPVKPIGLIAVLIGSVVMVGVCAWLLHNIKVANIALFAITTIVVLIFFWQAFKQNRVGRNKMFVAFILMLQAVVFFILYNQMPMSLNFFAINNVHHQILGFDVNPVSFQAFNPFWIIIVSPILAVVYTKLGAKGKDFSMPAKFTFGMFLCSLGFLTAAASGLFADAQGITSPWFIVLVYLFQSVGELMISALGLAMVAAFVPSYLTGFILGMWFLSQAVASMLASHVAALTATPVGVTDPLQTLPIYMSVFGKIGVATLIVAIIMTFMVPWLNRIMREEVKA.

Over 1–27 the chain is Cytoplasmic; the sequence is MSKTASVGLWDQPKPFFMIFFVELWER. The helical transmembrane segment at 28–48 threads the bilayer; it reads FGFYGVQGILAIYFVQQLGFS. At 49–52 the chain is on the periplasmic side; it reads EEQS. A helical membrane pass occupies residues 53-73; that stretch reads FITFGAFTALVYGLISVGGYV. The Cytoplasmic portion of the chain corresponds to 74–82; the sequence is GDHILGTKR. Residues 83–103 form a helical membrane-spanning segment; sequence TIVLGAIVMAIGYYMIGLSIM. Residues 104–106 lie on the Periplasmic side of the membrane; sequence KPE. Residues 107-127 form a helical membrane-spanning segment; the sequence is LIFYALGTVAVGNGLFKANPA. Topologically, residues 128–146 are cytoplasmic; sequence SLLAKCYQPQDPRLDGAFT. The helical transmembrane segment at 147–167 threads the bilayer; sequence LFYMSINLGSLFSLSLAPVIA. The Periplasmic portion of the chain corresponds to 168–172; that stretch reads EKYGY. Residues 173 to 193 traverse the membrane as a helical segment; the sequence is TVTYNICGIGLIIALLVYIAC. The Cytoplasmic portion of the chain corresponds to 194 to 211; the sequence is RRMVHNIGSAPDHHPVKP. Residues 212-232 form a helical membrane-spanning segment; sequence IGLIAVLIGSVVMVGVCAWLL. Over 233–234 the chain is Periplasmic; sequence HN. Residues 235 to 255 form a helical membrane-spanning segment; that stretch reads IKVANIALFAITTIVVLIFFW. The Cytoplasmic portion of the chain corresponds to 256–267; it reads QAFKQNRVGRNK. The chain crosses the membrane as a helical span at residues 268-288; the sequence is MFVAFILMLQAVVFFILYNQM. Residues 289–311 lie on the Periplasmic side of the membrane; that stretch reads PMSLNFFAINNVHHQILGFDVNP. Residues 312–332 form a helical membrane-spanning segment; that stretch reads VSFQAFNPFWIIIVSPILAVV. Over 333–348 the chain is Cytoplasmic; sequence YTKLGAKGKDFSMPAK. Residues 349-369 traverse the membrane as a helical segment; the sequence is FTFGMFLCSLGFLTAAASGLF. Topologically, residues 370-378 are periplasmic; sequence ADAQGITSP. A helical transmembrane segment spans residues 379–399; that stretch reads WFIVLVYLFQSVGELMISALG. Residues 400–423 lie on the Cytoplasmic side of the membrane; it reads LAMVAAFVPSYLTGFILGMWFLSQ. Residues 424–444 form a helical membrane-spanning segment; sequence AVASMLASHVAALTATPVGVT. Residues 445–455 are Periplasmic-facing; the sequence is DPLQTLPIYMS. Residues 456–476 form a helical membrane-spanning segment; sequence VFGKIGVATLIVAIIMTFMVP. Over 477–488 the chain is Cytoplasmic; it reads WLNRIMREEVKA.

The protein belongs to the major facilitator superfamily. Proton-dependent oligopeptide transporter (POT/PTR) (TC 2.A.17) family. DtpB subfamily.

It localises to the cell inner membrane. In terms of biological role, proton-dependent permease that transports di- and tripeptides. The chain is Dipeptide and tripeptide permease B from Xenorhabdus bovienii (strain SS-2004) (Xenorhabdus nematophila subsp. bovienii).